A 370-amino-acid chain; its full sequence is Cytochrome b (370 aa).

The next 4 helical transmembrane spans lie at Phe25 to Val45, Trp69 to Ile90, Trp105 to Leu125, and Phe170 to Met190. His75 and His89 together coordinate heme b. Positions 174 and 188 each coordinate heme b. His193 is a binding site for a ubiquinone. 4 consecutive transmembrane segments (helical) span residues Tyr218–Tyr238, Leu280–His300, Phe312–Thr332, and Phe339–Pro358.

Belongs to the cytochrome b family. As to quaternary structure, the cytochrome bc1 complex contains 3 respiratory subunits (MT-CYB, CYC1 and UQCRFS1), 2 core proteins (UQCRC1 and UQCRC2) and probably 6 low-molecular weight proteins. Requires heme b as cofactor.

It localises to the mitochondrion inner membrane. Component of the ubiquinol-cytochrome c reductase complex (complex III or cytochrome b-c1 complex) that is part of the mitochondrial respiratory chain. The b-c1 complex mediates electron transfer from ubiquinol to cytochrome c. Contributes to the generation of a proton gradient across the mitochondrial membrane that is then used for ATP synthesis. This is Cytochrome b (MT-CYB) from Corallus hortulanus enydris (Garden tree boa).